We begin with the raw amino-acid sequence, 523 residues long: Cyclin-dependent kinase 17 (523 aa).

Residue Ser-9 is modified to Phosphoserine. The tract at residues 30–55 (TIEENSSKDNEPIVKNGRPPTSHSMH) is disordered. Phosphoserine is present on residues Ser-80, Ser-92, and Ser-105. The segment at 103–123 (MGSDGESDQASGTSSDEVQSP) is disordered. Positions 110-123 (DQASGTSSDEVQSP) are enriched in polar residues. Phosphoserine is present on residues Ser-137, Ser-146, Ser-165, and Ser-180. The region spanning 192–473 (YIKLEKLGEG…AEEAMKHVYF (282 aa)) is the Protein kinase domain. ATP is bound by residues 198–206 (LGEGTYATV) and Lys-221. The active-site Proton acceptor is Asp-313. The disordered stretch occupies residues 501-523 (PGFRNSSYPETGHGKNRRQSMLF). The span at 514 to 523 (GKNRRQSMLF) shows a compositional bias: basic residues.

It belongs to the protein kinase superfamily. CMGC Ser/Thr protein kinase family. CDC2/CDKX subfamily. In terms of assembly, found in a complex containing CABLES1, CDK16 and TDRD7. Interacts with TDRD7.

The catalysed reaction is L-seryl-[protein] + ATP = O-phospho-L-seryl-[protein] + ADP + H(+). It carries out the reaction L-threonyl-[protein] + ATP = O-phospho-L-threonyl-[protein] + ADP + H(+). Functionally, may play a role in terminally differentiated neurons. Has a Ser/Thr-phosphorylating activity for histone H1. This Homo sapiens (Human) protein is Cyclin-dependent kinase 17 (CDK17).